A 168-amino-acid polypeptide reads, in one-letter code: Ribosome maturation factor RimP (168 aa).

This sequence belongs to the RimP family.

It localises to the cytoplasm. Its function is as follows. Required for maturation of 30S ribosomal subunits. The sequence is that of Ribosome maturation factor RimP from Bordetella parapertussis (strain 12822 / ATCC BAA-587 / NCTC 13253).